Reading from the N-terminus, the 174-residue chain is Small ribosomal subunit protein uS5 (174 aa).

Positions 16–79 constitute an S5 DRBM domain; the sequence is FSELIVSVRR…NAAKKNMIRV (64 aa).

It belongs to the universal ribosomal protein uS5 family. Part of the 30S ribosomal subunit. Contacts proteins S4 and S8.

In terms of biological role, with S4 and S12 plays an important role in translational accuracy. Its function is as follows. Located at the back of the 30S subunit body where it stabilizes the conformation of the head with respect to the body. This chain is Small ribosomal subunit protein uS5, found in Ehrlichia canis (strain Jake).